The primary structure comprises 348 residues: Rhodopsin (348 aa).

Methionine 1 bears the N-acetylmethionine mark. The Extracellular portion of the chain corresponds to 1–36 (MNGTEGPNFYVPYSNKSGVVRSPYEEPQYYLAEPWM). Residues asparagine 2 and asparagine 15 are each glycosylated (N-linked (GlcNAc...) asparagine). Residues 37–61 (FSCLAAYMFMLIVLGFPINFLTLYV) traverse the membrane as a helical segment. Residues 62–73 (TIQHKKLRTPLN) lie on the Cytoplasmic side of the membrane. Residues 74–96 (YILLNLAVADLFMVICGFTTTLV) traverse the membrane as a helical segment. Over 97-110 (TSLNGYFVFGTTGC) the chain is Extracellular. Cysteine 110 and cysteine 187 are joined by a disulfide. A helical transmembrane segment spans residues 111-133 (LVEGFFATTGGEVALWALVVLAI). A 'Ionic lock' involved in activated form stabilization motif is present at residues 134 to 136 (ERY). Topologically, residues 134 to 152 (ERYIVVCKPMSNFRFGENH) are cytoplasmic. A helical transmembrane segment spans residues 153 to 173 (AIMGVAFTWIMALACSVPPIF). At 174–202 (GWSRYIPEGMQCSCGIDYYTLNPEFNNES) the chain is on the extracellular side. Glutamate 201 is a Zn(2+) binding site. Residues 203 to 224 (FVIYMFVVHFIIPLTVIFFCYG) form a helical membrane-spanning segment. The Cytoplasmic segment spans residues 225 to 252 (QLVFTVKEAAAQQQESATTQKAEKEVTR). The chain crosses the membrane as a helical span at residues 253–274 (MVIIMVIAFLICWVPYASVAFY). The Extracellular portion of the chain corresponds to 275–286 (IFTHQGSDFGPI). Glutamine 279 serves as a coordination point for Zn(2+). Residues 287-308 (FMTLPAFFAKSSSIYNPVIYIM) form a helical membrane-spanning segment. N6-(retinylidene)lysine is present on lysine 296. Residues 309-348 (MNKQFRNCMITTLCCGKNPLGDDEASTTASKTETSQVAPA) are Cytoplasmic-facing. Residues cysteine 322 and cysteine 323 are each lipidated (S-palmitoyl cysteine). The interval 330–348 (DDEASTTASKTETSQVAPA) is interaction with SAG. At serine 334 the chain carries Phosphoserine. Threonine 335 and threonine 336 each carry phosphothreonine. Position 338 is a phosphoserine (serine 338). 2 positions are modified to phosphothreonine: threonine 340 and threonine 342. Serine 343 bears the Phosphoserine mark.

This sequence belongs to the G-protein coupled receptor 1 family. Opsin subfamily. In terms of assembly, homodimer. May form a complex composed of RHO, GRK1 and RCVRN in a Ca(2+)-dependent manner; RCVRN prevents the interaction between GRK1 and RHO. Interacts with GRK1. Interacts (phosphorylated form) with SAG. Interacts with GNAT1. Interacts with GNAT3. SAG and G-proteins compete for a common binding site. Interacts with PRCD; the interaction promotes PRCD stability. Forms a complex with ASAP1 and ARF4. Forms a complex with ASAP1, RAB11A, Rabin8/RAB3IP, ARF4 and RAB11FIP3; the complex regulates Golgi-to-cilia rhodopsin/RHO transport in photoreceptors. Post-translationally, phosphorylated on some or all of the serine and threonine residues present in the C-terminal region. In terms of processing, contains one covalently linked retinal chromophore. Upon light absorption, the covalently bound 11-cis-retinal is converted to all-trans-retinal. After hydrolysis of the Schiff base and release of the covalently bound all-trans-retinal, active rhodopsin is regenerated by binding of a fresh molecule of 11-cis-retinal.

The protein resides in the membrane. The protein localises to the cell projection. It localises to the cilium. It is found in the photoreceptor outer segment. In terms of biological role, photoreceptor required for image-forming vision at low light intensity. Required for photoreceptor cell viability after birth. Light-induced isomerization of 11-cis to all-trans retinal triggers a conformational change that activates signaling via G-proteins. Subsequent receptor phosphorylation mediates displacement of the bound G-protein alpha subunit by the arrestin SAG and terminates signaling. The chain is Rhodopsin (RHO) from Sminthopsis crassicaudata (Fat-tailed dunnart).